A 529-amino-acid chain; its full sequence is DEP domain-containing protein 1B (529 aa).

Residues 24–108 enclose the DEP domain; the sequence is FRARMPLRRH…DNRHLYRFPP (85 aa). A Phosphoserine modification is found at Ser160. The Rho-GAP domain occupies 201–393; it reads DSLEEVLNTK…FLMDNYQEIL (193 aa). Ser436 is modified (phosphoserine).

This is DEP domain-containing protein 1B (Depdc1b) from Mus musculus (Mouse).